We begin with the raw amino-acid sequence, 467 residues long: Hydroxyacid-oxoacid transhydrogenase, mitochondrial (467 aa).

K445 carries the N6-acetyllysine modification. S452 is modified (phosphoserine).

This sequence belongs to the iron-containing alcohol dehydrogenase family. Hydroxyacid-oxoacid transhydrogenase subfamily. Only expressed in adult liver.

Its subcellular location is the mitochondrion. It catalyses the reaction (S)-3-hydroxybutanoate + 2-oxoglutarate = (R)-2-hydroxyglutarate + acetoacetate. It carries out the reaction 4-hydroxybutanoate + 2-oxoglutarate = (R)-2-hydroxyglutarate + succinate semialdehyde. Functionally, catalyzes the cofactor-independent reversible oxidation of gamma-hydroxybutyrate (GHB) to succinic semialdehyde (SSA) coupled to reduction of 2-ketoglutarate (2-KG) to D-2-hydroxyglutarate (D-2-HG). D,L-3-hydroxyisobutyrate and L-3-hydroxybutyrate (L-3-OHB) are also substrates for HOT with 10-fold lower activities. The polypeptide is Hydroxyacid-oxoacid transhydrogenase, mitochondrial (ADHFE1) (Homo sapiens (Human)).